The sequence spans 397 residues: MLSQFFPHIKEKPLSERVKSRDAFVYLDRVMWSFGWTVPENKRWDLHYKLWSTFVTLLIFILLPISVSVEYIQRFKTFSAGEFLSSIQIGVNMYGSSFKSYLTMMGYKKRQEAKMSLDELDKRCVCDEERTIVHRHVALGNFCYIFYHIAYTSFLISNFLSFIMKRIHAWRMYFPYVDPEKQFYISSIAEVILRGWAVFMDLCTDVCPLISMVIARCHITLLKQRLRNLRSEPGRTEDEYLKELADCVRDHRLILDYVDALRSVFSGTIFVQFLLIGIVLGLSMINIMFFSTLSTGVAVVLFMSCVSMQTFPFCYLCNMIMDDCQEMADSLFQSDWTSADRRYKSTLVYFLHNLQQPIILTAGGVFPISMQTNLNMVKLAFTVVTIVKQFNLAEKFQ.

Residues 1–49 (MLSQFFPHIKEKPLSERVKSRDAFVYLDRVMWSFGWTVPENKRWDLHYK) lie on the Cytoplasmic side of the membrane. A helical transmembrane segment spans residues 50 to 70 (LWSTFVTLLIFILLPISVSVE). Residues 71-85 (YIQRFKTFSAGEFLS) are Extracellular-facing. Residues 86–105 (SIQIGVNMYGSSFKSYLTMM) traverse the membrane as a helical segment. Residues 106 to 143 (GYKKRQEAKMSLDELDKRCVCDEERTIVHRHVALGNFC) lie on the Cytoplasmic side of the membrane. Residues 144–164 (YIFYHIAYTSFLISNFLSFIM) traverse the membrane as a helical segment. Residues 165–194 (KRIHAWRMYFPYVDPEKQFYISSIAEVILR) lie on the Extracellular side of the membrane. The helical transmembrane segment at 195–215 (GWAVFMDLCTDVCPLISMVIA) threads the bilayer. At 216–268 (RCHITLLKQRLRNLRSEPGRTEDEYLKELADCVRDHRLILDYVDALRSVFSGT) the chain is on the cytoplasmic side. Residues 269–289 (IFVQFLLIGIVLGLSMINIMF) traverse the membrane as a helical segment. At 290–295 (FSTLST) the chain is on the extracellular side. Residues 296–316 (GVAVVLFMSCVSMQTFPFCYL) traverse the membrane as a helical segment. Over 317-347 (CNMIMDDCQEMADSLFQSDWTSADRRYKSTL) the chain is Cytoplasmic. The helical transmembrane segment at 348–368 (VYFLHNLQQPIILTAGGVFPI) threads the bilayer. The Extracellular segment spans residues 369 to 397 (SMQTNLNMVKLAFTVVTIVKQFNLAEKFQ).

This sequence belongs to the insect chemoreceptor superfamily. Heteromeric odorant receptor channel (TC 1.A.69) family. Or2a subfamily. In terms of assembly, interacts with Orco, via conserved C-terminal cytoplasmic loops. Complexes exist early in the endomembrane system in olfactory sensory neurons (OSNs), coupling these complexes to the conserved ciliary trafficking pathway. In terms of tissue distribution, expressed with Orco in 20-22 sensory neurons on the medial-proximal edge of the antenna. This expression pattern matches the distribution of the large sensilla basiconica. Expression is first seen at 60 hours APF in a subset of cells restricted to a subregion of the developing antenna. Expression continues throughout antennal development. Expressed in the ab3A neuron which responds to ethyl butyrate.

Its subcellular location is the cell membrane. Functionally, odorant receptor which mediates acceptance or avoidance behavior, depending on its substrates. The odorant receptor repertoire encodes a large collection of odor stimuli that vary widely in identity, intensity, and duration. Involved in the behavioral responses to esters. Complexes with Orco to form odorant-sensing units, providing sensitive and prolonged odorant signaling and calcium permeability. They are necessary and sufficient to promote functional reconstitution of odor-evoked signaling in sensory neurons that normally respond only to carbon dioxide. The polypeptide is Odorant receptor 22b (Or22b) (Drosophila melanogaster (Fruit fly)).